Consider the following 624-residue polypeptide: Probable potassium transport system protein Kup 2 (624 aa).

Helical transmembrane passes span 14-34 (LSFAALGVVFGDIGTSPLYAF), 51-71 (ILSLIFWSLIIIVSIKYLVIV), 97-117 (GGWLLFITLVGIGLIIGDGML), 133-153 (LSPNLAKYVLPVTLIILFFLF), 163-183 (IGVYFAPVMLVWFITIGILGF), 211-231 (SALFILGGVFLVMTGGEALFA), 245-265 (WFAVALPALLLCYFGQGAFVL), 283-303 (FLPVMIILATLATIIASQAII), 335-355 (VYLPLINFILALGTCSLVVIF), 364-384 (AYGIAVNLDMLITTVLVGIIA), 393-413 (FKILIFLLILIIELAFFAGNI), and 416-436 (LLTGGWIPVLIAFLGFVVMYT).

Belongs to the HAK/KUP transporter (TC 2.A.72) family.

The protein resides in the cell inner membrane. It carries out the reaction K(+)(in) + H(+)(in) = K(+)(out) + H(+)(out). Functionally, transport of potassium into the cell. Likely operates as a K(+):H(+) symporter. The polypeptide is Probable potassium transport system protein Kup 2 (Legionella pneumophila (strain Lens)).